Reading from the N-terminus, the 213-residue chain is ATP phosphoribosyltransferase (213 aa).

Belongs to the ATP phosphoribosyltransferase family. Short subfamily. In terms of assembly, heteromultimer composed of HisG and HisZ subunits.

It localises to the cytoplasm. It carries out the reaction 1-(5-phospho-beta-D-ribosyl)-ATP + diphosphate = 5-phospho-alpha-D-ribose 1-diphosphate + ATP. It participates in amino-acid biosynthesis; L-histidine biosynthesis; L-histidine from 5-phospho-alpha-D-ribose 1-diphosphate: step 1/9. Catalyzes the condensation of ATP and 5-phosphoribose 1-diphosphate to form N'-(5'-phosphoribosyl)-ATP (PR-ATP). Has a crucial role in the pathway because the rate of histidine biosynthesis seems to be controlled primarily by regulation of HisG enzymatic activity. The protein is ATP phosphoribosyltransferase of Methylococcus capsulatus (strain ATCC 33009 / NCIMB 11132 / Bath).